Here is a 2170-residue protein sequence, read N- to C-terminus: ATP-binding cassette sub-family A member 7 (2170 aa).

The chain crosses the membrane as a helical span at residues 22-42 (PIQLVVELLWPLFLFFILVAV). The Extracellular segment spans residues 43-547 (RHSHPPLEHH…DVFLRVLSRS (505 aa)). Cys75 and Cys222 are disulfide-bonded. N-linked (GlcNAc...) asparagine glycosylation occurs at Asn309. Transmembrane regions (helical) follow at residues 548-568 (LPLF…KAVV), 591-611 (LGWF…LVLV), 624-644 (VVVF…SFLL), 653-673 (LAAA…VLCV), 679-699 (LPLG…GFGC), and 733-753 (AFLL…EAVC). An ABC transporter 1 domain is found at 805-1036 (VSIRGLKKHF…LGCGYYLTLV (232 aa)). 839–846 (GHNGAGKT) provides a ligand contact to ATP. Residues 847–867 (TTLSILSGLFPPSSGSASILG) form a helical membrane-spanning segment. Positions 1044 to 1086 (THDLKGDTEDPRREKKSGSEGKTADTVLTRDGPHRSSQVPAPD) are disordered. Residues 1045-1066 (HDLKGDTEDPRREKKSGSEGKT) show a composition bias toward basic and acidic residues. Residues 1257–1277 (IVLPALFVGLALFFTLIVPPF) form a helical membrane-spanning segment. Residues 1278–1562 (GQYPPLQLSP…TLIASSVDVL (285 aa)) are Extracellular-facing. A disulfide bridge links Cys1370 with Cys1384. A run of 6 helical transmembrane segments spans residues 1563–1583 (VSIC…LVLI), 1609–1629 (FLWD…IFLA), 1646–1666 (LLLL…SFFF), 1674–1694 (VVLT…TFVL), 1708–1728 (ILKQ…LIDM), and 1754–1774 (IIGK…LITL). One can recognise an ABC transporter 2 domain in the interval 1818–2050 (LVLRDLTKVY…FGAGHTLTLR (233 aa)). An ATP-binding site is contributed by 1852-1859 (GVNGAGKT). A disordered region spans residues 2129 to 2170 (QGEEEEGSGQETETREVSTPGLQHPKRVSRFLEDPSSVETVI).

It belongs to the ABC transporter superfamily. ABCA family. Post-translationally, N-glycosylated. As to expression, expressed in blood cells. Also detected in brain and ovary tissues (at protein level). Expressed in platelet.

The protein resides in the cell membrane. The protein localises to the golgi apparatus membrane. Its subcellular location is the early endosome membrane. It is found in the cell projection. It localises to the ruffle membrane. The protein resides in the phagocytic cup. The protein localises to the cytoplasm. In terms of biological role, ATP-binding cassette (ABC) transporter that plays a role in lipid homeostasis and macrophage-mediated phagocytosis. Binds APOA1 and may function in apolipoprotein-mediated phospholipid efflux from cells. May also mediate cholesterol efflux. May regulate cellular ceramide homeostasis during keratinocyte differentiation. Involved in lipid raft organization and CD1D localization on thymocytes and antigen-presenting cells, which plays an important role in natural killer T-cell development and activation. Plays a role in phagocytosis of apoptotic cells by macrophages. Macrophage phagocytosis is stimulated by APOA1 or APOA2, probably by stabilization of ABCA7. Also involved in phagocytic clearance of amyloid-beta by microglia cells and macrophages. Further limits amyloid-beta production by playing a role in the regulation of amyloid-beta A4 precursor protein (APP) endocytosis and/or processing. This chain is ATP-binding cassette sub-family A member 7 (Abca7), found in Rattus norvegicus (Rat).